A 29-amino-acid polypeptide reads, in one-letter code: Potassium channel toxin alpha-KTx 20.1 (29 aa).

3 cysteine pairs are disulfide-bonded: Cys-2–Cys-20, Cys-7–Cys-24, and Cys-11–Cys-26.

It belongs to the short scorpion toxin superfamily. Potassium channel inhibitor family. Alpha-KTx 20 subfamily. As to expression, expressed by the venom gland.

The protein localises to the secreted. Its function is as follows. Reduces potassium currents through Kv1.2/KCNA2 and Kv1.3/KCNA3 voltage-gated potassium channels. This chain is Potassium channel toxin alpha-KTx 20.1, found in Tityus trivittatus (Argentinean scorpion).